Here is a 182-residue protein sequence, read N- to C-terminus: Phospholipase A2 inhibitor gamma subunit A2 (182 aa).

Cystine bridges form between Cys3-Cys27, Cys6-Cys13, Cys20-Cys48, Cys54-Cys75, Cys76-Cys81, Cys99-Cys124, Cys117-Cys146, and Cys150-Cys172. N-linked (GlcNAc...) asparagine glycosylation occurs at Asn157.

It belongs to the CNF-like-inhibitor family. Heterodimer of subunit A and subunit B.

It localises to the secreted. In terms of biological role, phospholipase A2 (PA2) inhibitor. Inhibits the enzymatic activity of PA2 of Deinagkistrodon acutus. Also shows a wide anti-hemorrhage activities to D.acutus, Naja atra and Agkistrodon halys venom. The native protein is more potent than the recombinant one. The sequence is that of Phospholipase A2 inhibitor gamma subunit A2 from Trimerodytes annularis (Red-bellied annulate keelback).